A 448-amino-acid chain; its full sequence is Phosphoglucosamine mutase (448 aa).

Ser100 acts as the Phosphoserine intermediate in catalysis. Mg(2+) contacts are provided by Ser100, Asp240, Asp242, and Asp244. Ser100 carries the post-translational modification Phosphoserine.

It belongs to the phosphohexose mutase family. The cofactor is Mg(2+). In terms of processing, activated by phosphorylation.

The catalysed reaction is alpha-D-glucosamine 1-phosphate = D-glucosamine 6-phosphate. Catalyzes the conversion of glucosamine-6-phosphate to glucosamine-1-phosphate. The protein is Phosphoglucosamine mutase of Bacillus mycoides (strain KBAB4) (Bacillus weihenstephanensis).